Consider the following 772-residue polypeptide: Polyribonucleotide nucleotidyltransferase (772 aa).

The Mg(2+) site is built by aspartate 486 and aspartate 492. The region spanning 553-612 (PRIETLQIDKSKIRDVIGTGGKVIREIVATTGAKVDIDDEGLIKISSSDLTQIEAAKNWI) is the KH domain. The 69-residue stretch at 622–690 (GKIYKGKVVN…QRGKVRLSMR (69 aa)) folds into the S1 motif domain. Residues 695-772 (ETGAELEDTR…HMPAFLKSDD (78 aa)) form a disordered region. Over residues 701 to 760 (EDTRPPREPREPRGDRGDRGDRGDRRGPRGDRGPRREGGDRGPRREGGDRPRRDRDDGPA) the composition is skewed to basic and acidic residues.

The protein belongs to the polyribonucleotide nucleotidyltransferase family. Mg(2+) serves as cofactor.

The protein localises to the cytoplasm. It carries out the reaction RNA(n+1) + phosphate = RNA(n) + a ribonucleoside 5'-diphosphate. Functionally, involved in mRNA degradation. Catalyzes the phosphorolysis of single-stranded polyribonucleotides processively in the 3'- to 5'-direction. The chain is Polyribonucleotide nucleotidyltransferase from Novosphingobium aromaticivorans (strain ATCC 700278 / DSM 12444 / CCUG 56034 / CIP 105152 / NBRC 16084 / F199).